We begin with the raw amino-acid sequence, 1268 residues long: SR-related and CTD-associated factor 8 (1268 aa).

The CID domain maps to 1–139; it reads MEAVKTFNSE…PLLDMAAGIP (139 aa). Residue T6 is modified to Phosphothreonine. K18 participates in a covalent cross-link: Glycyl lysine isopeptide (Lys-Gly) (interchain with G-Cter in SUMO1). At S273 the chain carries Phosphoserine. Disordered stretches follow at residues 322–355 and 385–469; these read QQQP…QQHF and EIFE…PVRS. The span at 342 to 354 shows a compositional bias: polar residues; the sequence is HSASPSQGSSQQH. Over residues 394 to 443 the composition is skewed to basic residues; it reads VAVRSRSRTHSRSRSRSPRKRRSRSRSGSRKRKHRKRSRSRSRERKRKSS. Residues 447-461 are compositionally biased toward basic and acidic residues; that stretch reads SSERRAREREKERQK. Positions 477-551 constitute an RRM domain; sequence TTLWVGQVDK…KVIKIAWALN (75 aa). A Phosphothreonine modification is found at T615. Position 617 is a phosphoserine (S617). Residues 753–808 form a disordered region; the sequence is AGNVFNPPSKAEPEEKVPHLTEHQIPSGENTRPVIPSDIPSSAPMLAQPPGASNTS. The segment covering 763–774 has biased composition (basic and acidic residues); sequence AEPEEKVPHLTE. An asymmetric dimethylarginine mark is found at R915, R925, and R936. Residues 947–1063 are disordered; the sequence is QRGIPPPSVL…GRDHFGRPPV (117 aa). Residues 961–970 show a composition bias toward pro residues; it reads HPPPRGPFPP. 2 stretches are compositionally biased toward basic and acidic residues: residues 1009–1025 and 1032–1063; these read EGDR…REGI and DVRD…RPPV. Residue R1071 is modified to Asymmetric dimethylarginine. A disordered region spans residues 1199–1268; the sequence is ATSQRKGENV…VVESTETEGT (70 aa). Over residues 1249-1262 the composition is skewed to low complexity; the sequence is GTAAGVESEAVVES.

Interacts with POLR2A; via C-terminal heptapeptide repeat domain (CTD) phosphorylated at 'Ser-2' and 'Ser-5'. Identified in a complex with CDC5L and other spliceosomal proteins.

It localises to the nucleus. Its subcellular location is the nucleus matrix. Anti-terminator protein required to prevent early mRNA termination during transcription. Together with SCAF4, acts by suppressing the use of early, alternative poly(A) sites, thereby preventing the accumulation of non-functional truncated proteins. Mechanistically, associates with the phosphorylated C-terminal heptapeptide repeat domain (CTD) of the largest RNA polymerase II subunit (POLR2A), and subsequently binds nascent RNA upstream of early polyadenylation sites to prevent premature mRNA transcript cleavage and polyadenylation. Independently of SCAF4, also acts as a positive regulator of transcript elongation. This Rattus norvegicus (Rat) protein is SR-related and CTD-associated factor 8.